We begin with the raw amino-acid sequence, 482 residues long: Glucose starvation modulator protein 1 (482 aa).

The segment at residues 20–48 (CVFCHEKHLQCDVGRPCQNCEKRNIGESC) is a DNA-binding region (zn(2)-C6 fungal-type). The 73-residue stretch at 350–422 (LLEYENMSKM…KLFNEYLAFS (73 aa)) folds into the PAS domain.

Belongs to the ERT1/acuK family.

It is found in the nucleus. In terms of biological role, transcription factor which regulates nonfermentable carbon utilization. The chain is Glucose starvation modulator protein 1 (GSM1) from Eremothecium gossypii (strain ATCC 10895 / CBS 109.51 / FGSC 9923 / NRRL Y-1056) (Yeast).